A 983-amino-acid chain; its full sequence is Nitrate reductase [NADPH] (983 aa).

Low complexity-rich tracts occupy residues 1-14 (MTIS…SSKT) and 26-48 (SSSS…SSPT). Residues 1–50 (MTISTTSSSTSSKTSSEKGDDLKGFSSSSSPASSRSSSATTPEPSSPTVL) form a disordered region. Residue C184 coordinates Mo-molybdopterin. The Cytochrome b5 heme-binding domain occupies 585-662 (DTIITAADLA…LRDFHLGRLE (78 aa)). Residues H622 and H645 each coordinate heme. An FAD-binding FR-type domain is found at 688–815 (KKWRATRLVS…KGPLGSFTYL (128 aa)). Residues 746-749 (RAYT), 763-767 (LIKVY), F768, F780, 784-786 (KMT), S841, and T844 each bind FAD. Residue 952–961 (LALVCGPPPM) participates in NADP(+) binding.

It belongs to the nitrate reductase family. As to quaternary structure, homodimer. It depends on FAD as a cofactor. The cofactor is heme. Mo-molybdopterin serves as cofactor.

The enzyme catalyses nitrite + NADP(+) + H2O = nitrate + NADPH + H(+). Its pathway is nitrogen metabolism; nitrate reduction (assimilation). In terms of biological role, nitrate reductase is a key enzyme involved in the first step of nitrate assimilation in plants, fungi and bacteria. This Mycosarcoma maydis (Corn smut fungus) protein is Nitrate reductase [NADPH] (NAR1).